Reading from the N-terminus, the 170-residue chain is MASFFSTLRRSLNRLLIALPVLLGLMISTPAQAAQWDAETLTVPADGDGALVTFSEQEIKTGRKVFNVSCGTCHAGGITKTNQNVGLDTETLALATPARDNVASLVDYLQDPTSYDGEYSIADLHPSMRSRDLYPAMRDLTDEDLRLMSGYILVAPKVLGVDWGGGKIYF.

The N-terminal stretch at 1-33 (MASFFSTLRRSLNRLLIALPVLLGLMISTPAQA) is a signal peptide. Positions 70, 73, 74, and 125 each coordinate heme c.

This sequence belongs to the cytochrome c family. PsbV subfamily. As to quaternary structure, PSII is composed of 1 copy each of membrane proteins PsbA, PsbB, PsbC, PsbD, PsbE, PsbF, PsbH, PsbI, PsbJ, PsbK, PsbL, PsbM, PsbT, PsbX, PsbY, PsbZ, Psb30/Ycf12, peripheral proteins PsbO, CyanoQ (PsbQ), PsbU, PsbV and a large number of cofactors. It forms dimeric complexes. The cofactor is heme c.

It is found in the cellular thylakoid membrane. Functionally, one of the extrinsic, lumenal subunits of photosystem II (PSII). PSII is a light-driven water plastoquinone oxidoreductase, using light energy to abstract electrons from H(2)O, generating a proton gradient subsequently used for ATP formation. The extrinsic proteins stabilize the structure of photosystem II oxygen-evolving complex (OEC), the ion environment of oxygen evolution and protect the OEC against heat-induced inactivation. Low-potential cytochrome c that plays a role in the OEC of PSII. The chain is Photosystem II extrinsic protein V from Synechococcus sp. (strain CC9311).